A 434-amino-acid polypeptide reads, in one-letter code: Probable G-protein coupled receptor B0563.6 (434 aa).

N12 carries N-linked (GlcNAc...) asparagine glycosylation. 2 consecutive transmembrane segments (helical) span residues V30 to A50 and L65 to L85. N-linked (GlcNAc...) asparagine glycosylation occurs at N88. The next 2 helical transmembrane spans lie at L105–S125 and A147–I167. The N-linked (GlcNAc...) asparagine glycan is linked to N181. 2 helical membrane passes run I208–F228 and G258–I278. N-linked (GlcNAc...) asparagine glycans are attached at residues N429 and N430.

It belongs to the G-protein coupled receptor 1 family.

It localises to the cell membrane. Not known. Putative receptor. The chain is Probable G-protein coupled receptor B0563.6 from Caenorhabditis elegans.